The sequence spans 293 residues: Methylsterol monooxygenase 1 (293 aa).

A run of 2 helical transmembrane segments spans residues 55–75 (LIVH…FQFI) and 100–120 (VLLF…YYFT). Residues 145-274 (CAVIEDTWHY…FTWWDRIFGT (130 aa)) form the Fatty acid hydroxylase domain. The Histidine box-1 motif lies at 157-161 (HRLLH). The Histidine box-2 motif lies at 170–174 (HKVHH). The helical transmembrane segment at 199-219 (FFIGIVLLCDHVILLWAWVTI) threads the bilayer. The Histidine box-3 signature appears at 249-255 (HHDFHHM).

It belongs to the sterol desaturase family. It depends on Fe cation as a cofactor. Ubiquitinated by MARCHF6, leading to proteasomal degradation.

Its subcellular location is the endoplasmic reticulum membrane. The enzyme catalyses 4,4-dimethyl-5alpha-cholest-7-en-3beta-ol + 6 Fe(II)-[cytochrome b5] + 3 O2 + 5 H(+) = 4alpha-carboxy-4beta-methyl-5alpha-cholest-7-ene-3beta-ol + 6 Fe(III)-[cytochrome b5] + 4 H2O. The catalysed reaction is 4,4-dimethyl-5alpha-cholesta-8,24-dien-3beta-ol + 6 Fe(II)-[cytochrome b5] + 3 O2 + 5 H(+) = 4beta-methylzymosterol-4alpha-carboxylate + 6 Fe(III)-[cytochrome b5] + 4 H2O. It carries out the reaction 4alpha-methylzymosterol + 6 Fe(II)-[cytochrome b5] + 3 O2 + 5 H(+) = 4alpha-carboxyzymosterol + 6 Fe(III)-[cytochrome b5] + 4 H2O. It catalyses the reaction 4alpha-methyl-5alpha-cholest-7-en-3beta-ol + 6 Fe(II)-[cytochrome b5] + 3 O2 + 5 H(+) = 4alpha-carboxy-5alpha-cholest-7-en-3beta-ol + 6 Fe(III)-[cytochrome b5] + 4 H2O. The enzyme catalyses 4,4-dimethyl-5alpha-cholest-8-en-3beta-ol + 6 Fe(II)-[cytochrome b5] + 3 O2 + 5 H(+) = 4alpha-carboxy-4beta-methyl-5alpha-cholest-8-en-3beta-ol + 6 Fe(III)-[cytochrome b5] + 4 H2O. The catalysed reaction is 4alpha-methyl-5alpha-cholest-8-en-3beta-ol + 6 Fe(II)-[cytochrome b5] + 3 O2 + 5 H(+) = 4alpha-carboxy-5alpha-cholest-8-ene-3beta-ol + 6 Fe(III)-[cytochrome b5] + 4 H2O. The protein operates within steroid biosynthesis; zymosterol biosynthesis; zymosterol from lanosterol: step 3/6. It participates in steroid biosynthesis; cholesterol biosynthesis. Catalyzes the three-step monooxygenation required for the demethylation of 4,4-dimethyl and 4alpha-methylsterols, which can be subsequently metabolized to cholesterol. In Macaca fascicularis (Crab-eating macaque), this protein is Methylsterol monooxygenase 1 (MSMO1).